Here is a 612-residue protein sequence, read N- to C-terminus: Chaperone protein DnaK (612 aa).

Thr-173 carries the phosphothreonine; by autocatalysis modification. Positions 524–544 (DDKVSEEDKQKAESAKDELKQ) are enriched in basic and acidic residues. 2 disordered regions span residues 524–560 (DDKV…KKDA) and 572–612 (LYEQ…DDKK). Positions 574-586 (EQVQQEAQQASGE) are enriched in low complexity. The span at 587-612 (QGEESGNQDDDVVDADYSEVDDDDKK) shows a compositional bias: acidic residues.

It belongs to the heat shock protein 70 family.

In terms of biological role, acts as a chaperone. The polypeptide is Chaperone protein DnaK (Oceanobacillus iheyensis (strain DSM 14371 / CIP 107618 / JCM 11309 / KCTC 3954 / HTE831)).